The primary structure comprises 132 residues: Fatty acid-binding protein 9 (132 aa).

A phosphoserine mark is found at Ser-13, Ser-14, Ser-44, and Ser-91.

This sequence belongs to the calycin superfamily. Fatty-acid binding protein (FABP) family.

The protein resides in the cytoplasm. In Homo sapiens (Human), this protein is Fatty acid-binding protein 9 (FABP9).